We begin with the raw amino-acid sequence, 355 residues long: 3-isopropylmalate dehydrogenase (355 aa).

Substrate contacts are provided by Arg-90, Arg-100, Arg-128, and Asp-222. Asp-222, Asp-246, and Asp-250 together coordinate Mg(2+). 280-292 (GSAPDIAGKGVAN) serves as a coordination point for NAD(+).

This sequence belongs to the isocitrate and isopropylmalate dehydrogenases family. LeuB type 1 subfamily. Homodimer. The cofactor is Mg(2+). Mn(2+) serves as cofactor.

The protein localises to the cytoplasm. It catalyses the reaction (2R,3S)-3-isopropylmalate + NAD(+) = 4-methyl-2-oxopentanoate + CO2 + NADH. The protein operates within amino-acid biosynthesis; L-leucine biosynthesis; L-leucine from 3-methyl-2-oxobutanoate: step 3/4. Functionally, catalyzes the oxidation of 3-carboxy-2-hydroxy-4-methylpentanoate (3-isopropylmalate) to 3-carboxy-4-methyl-2-oxopentanoate. The product decarboxylates to 4-methyl-2 oxopentanoate. This is 3-isopropylmalate dehydrogenase from Cupriavidus pinatubonensis (strain JMP 134 / LMG 1197) (Cupriavidus necator (strain JMP 134)).